The primary structure comprises 283 residues: 9,11-endoperoxide prostaglandin H2 reductase (283 aa).

NADP(+)-binding positions include 23 to 24 (VW) and D48. Y53 serves as the catalytic Proton donor. Residue H111 coordinates substrate. Residues 140–141 (SN), Q162, 188–193 (WSPLGS), 234–236 (KST), and 240–244 (RIQEN) each bind NADP(+). The disordered stretch occupies residues 264 to 283 (NEDKRIGGDPDNFFPGGEEA).

Belongs to the aldo/keto reductase family. Monomer.

Its subcellular location is the cytoplasm. It catalyses the reaction prostaglandin F2alpha + NADP(+) = prostaglandin H2 + NADPH + H(+). It participates in lipid metabolism; prostaglandin biosynthesis. Functionally, catalyzes the NADP-dependent formation of prostaglandin F2-alpha from prostaglandin H2. Also has aldo/ketoreductase activity towards the synthetic substrates 9,10-phenanthrenequinone and p-nitrobenzaldehyde. This chain is 9,11-endoperoxide prostaglandin H2 reductase, found in Trypanosoma cruzi (strain CL Brener).